The chain runs to 174 residues: Large ribosomal subunit protein uL10 (174 aa).

Belongs to the universal ribosomal protein uL10 family. In terms of assembly, part of the ribosomal stalk of the 50S ribosomal subunit. The N-terminus interacts with L11 and the large rRNA to form the base of the stalk. The C-terminus forms an elongated spine to which L12 dimers bind in a sequential fashion forming a multimeric L10(L12)X complex.

Its function is as follows. Forms part of the ribosomal stalk, playing a central role in the interaction of the ribosome with GTP-bound translation factors. In Trichlorobacter lovleyi (strain ATCC BAA-1151 / DSM 17278 / SZ) (Geobacter lovleyi), this protein is Large ribosomal subunit protein uL10.